The sequence spans 2313 residues: Voltage-dependent R-type calcium channel subunit alpha-1E (2313 aa).

The interval 1-38 (MARFGEAVVARPGSGDGDSDQSRNRQGTPVPASGQAAA) is disordered. The Cytoplasmic segment spans residues 1–89 (MARFGEAVVA…KYAKKLIDWP (89 aa)). Ser-14 and Ser-19 each carry phosphoserine. The stretch at 76–354 (NIVRKYAKKL…LVLGVLSGEF (279 aa)) is one I repeat. Residues 90 to 108 (PFEYMILATIIANCIVLAL) traverse the membrane as a helical segment. The Extracellular portion of the chain corresponds to 109–127 (EQHLPEDDKTPMSRRLEKT). The chain crosses the membrane as a helical span at residues 128-146 (EPYFIGIFCFEAGIKIVAL). Over 147-158 (GFIFHKGSYLRN) the chain is Cytoplasmic. The chain crosses the membrane as a helical span at residues 159–173 (GWNVMDFIVVLSGIL). At 174–185 (ATAGTHFNTHVD) the chain is on the extracellular side. The helical transmembrane segment at 186-205 (LRTLRAVRVLRPLKLVSGIP) threads the bilayer. Topologically, residues 206-223 (SLQIVLKSIMKAMVPLLQ) are cytoplasmic. A helical transmembrane segment spans residues 224 to 244 (IGLLLFFAILMFAIIGLEFYS). The Extracellular portion of the chain corresponds to 245–326 (GKLHRACFMN…NTNDALGATW (82 aa)). Asn-254 carries an N-linked (GlcNAc...) asparagine glycan. Residues 327 to 350 (NWLYFIPLIIIGSFFVLNLVLGVL) form a helical membrane-spanning segment. At 351–476 (SGEFAKERER…ISIRHMVKSQ (126 aa)) the chain is on the cytoplasmic side. The interval 374–391 (QQIERELNGYRAWIDKAE) is binding to the beta subunit. Asp-426 lines the Ca(2+) pocket. Ser-427 carries the phosphoserine modification. Positions 428, 430, and 432 each coordinate Ca(2+). The residue at position 440 (Thr-440) is a Phosphothreonine. The II repeat unit spans residues 462-706 (ERLLRISIRH…VFLAIAVDNL (245 aa)). A helical transmembrane segment spans residues 477–496 (VFYWIVLSLVALNTACVAIV). Residues 497–509 (HHNQPQWLTHLLY) are Extracellular-facing. A helical transmembrane segment spans residues 510–529 (YAEFLFLGLFLLEMSLKMYG). The Cytoplasmic portion of the chain corresponds to 530–538 (MGPRLYFHS). A helical membrane pass occupies residues 539-557 (SFNCFDFGVTVGSIFEVVW). The Extracellular segment spans residues 558–567 (AIFRPGTSFG). The chain crosses the membrane as a helical span at residues 568–586 (ISVLRALRLLRIFKITKYW). The Cytoplasmic segment spans residues 587–605 (ASLRNLVVSLMSSMKSIIS). A helical transmembrane segment spans residues 606–625 (LLFLLFLFIVVFALLGMQLF). Residues 626-678 (GGRFNFNDGTPSANFDTFPAAIMTVFQILTGEDWNEVMYNGIRSQGGVSSGMW) lie on the Extracellular side of the membrane. The helical transmembrane segment at 679–703 (SAIYFIVLTLFGNYTLLNVFLAIAV) threads the bilayer. The Cytoplasmic portion of the chain corresponds to 704 to 1148 (DNLANAQELT…TNPIRRACHY (445 aa)). The disordered stretch occupies residues 729–774 (LQKAKEVSPMSAPNMPSIERDRRRRHHMSMWEPRSSHLRERRRRHH). 5 positions are modified to phosphoserine: Ser-736, Ser-745, Ser-793, Ser-815, and Ser-855. The tract at residues 851 to 984 (SRGGSLKGDG…EERAQDLRRT (134 aa)) is disordered. Residues 866 to 875 (ALDNQRTPLS) show a composition bias toward polar residues. Basic residues predominate over residues 913–926 (RHRQSQRRSRHRRV). A compositionally biased stretch (low complexity) spans 933–945 (SSSASRSRSASQE). Phosphoserine is present on Ser-947. Over residues 955-983 (EGEKDHELRGNHGAKEPTIQEERAQDLRR) the composition is skewed to basic and acidic residues. Ser-1097 bears the Phosphoserine mark. A disordered region spans residues 1103 to 1125 (EIREDEEEVEKKKQKKEKRETGK). One copy of the III repeat lies at 1140 to 1426 (NPIRRACHYI…IFVALIIITF (287 aa)). Residues 1149-1165 (IVNLRYFEMCILLVIAA) form a helical membrane-spanning segment. Topologically, residues 1166-1189 (SSIALAAEDPVLTNSERNKVLRYF) are extracellular. A helical membrane pass occupies residues 1190–1209 (DYVFTGVFTFEMVIKMIDQG). Over 1210 to 1217 (LILQDGSY) the chain is Cytoplasmic. A helical membrane pass occupies residues 1218–1240 (FRDLWNILDFVVVVGALVAFALA). Topologically, residues 1241 to 1254 (NALGTNKGRDIKTI) are extracellular. Residues 1255–1272 (KSLRVLRVLRPLKTIKRL) traverse the membrane as a helical segment. Residues 1273–1291 (PKLKAVFDCVVTSLKNVFN) are Cytoplasmic-facing. The chain crosses the membrane as a helical span at residues 1292 to 1311 (ILIVYKLFMFIFAVIAVQLF). The Extracellular segment spans residues 1312-1398 (KGKFFYCTDS…RGPSRSNRME (87 aa)). A helical transmembrane segment spans residues 1399–1422 (MSIFYVVYFVVFPFFFVNIFVALI). Residues 1423–1479 (IITFQEQGDKMMEECSLEKNERACIDFAISAKPLTRYMPQNRHTFQYRVWHFVVSPS) are Cytoplasmic-facing. Residues 1463 to 1726 (NRHTFQYRVW…LFVAVIMDNF (264 aa)) form an IV repeat. A helical membrane pass occupies residues 1480-1498 (FEYTIMAMIALNTVVLMMK). The Extracellular segment spans residues 1499–1513 (YYSAPCTYELALKYL). The helical transmembrane segment at 1514–1533 (NIAFTMVFSLECVLKVIAFG) threads the bilayer. At 1534–1541 (FLNYFRDT) the chain is on the cytoplasmic side. A helical transmembrane segment spans residues 1542-1560 (WNIFDFITVIGSITEIILT). Topologically, residues 1561–1571 (DSKLVNTSGFN) are extracellular. Asn-1566 and Asn-1571 each carry an N-linked (GlcNAc...) asparagine glycan. Residues 1572 to 1590 (MSFLKLFRAARLIKLLRQG) traverse the membrane as a helical segment. Residues 1591-1609 (YTIRILLWTFVQSFKALPY) are Cytoplasmic-facing. Residues 1610 to 1629 (VCLLIAMLFFIYAIIGMQVF) traverse the membrane as a helical segment. The Extracellular portion of the chain corresponds to 1630-1698 (GNIKLDEESH…NENERCGTDL (69 aa)). Residues 1699–1724 (AYVYFVSFIFFCSFLMLNLFVAVIMD) traverse the membrane as a helical segment. The Cytoplasmic segment spans residues 1725–2313 (NFEYLTRDSS…LSDTEEDDKC (589 aa)). Residues 1739 to 1774 (HHLDEFVRVWAEYDRAACGRIHYTEMYEMLTLMSPP) form the EF-hand domain. Positions 1752, 1758, and 1763 each coordinate Ca(2+). Disordered stretches follow at residues 1970 to 2170 (VSEL…RPLL), 2206 to 2225 (CLTESSNSPHPQQSQHASPQ), and 2263 to 2295 (SNTIGSAPPLRHSWQMPNGHYRRRRRGGPGPGM). Over residues 2012–2023 (TDPSSMRRSFST) the composition is skewed to polar residues. Over residues 2055–2064 (HSSLRLSAHR) the composition is skewed to low complexity. The segment covering 2065 to 2085 (LNSDSGHKSDTHRSGGRERGR) has biased composition (basic and acidic residues). Phosphoserine is present on residues Ser-2094 and Ser-2113. Residues 2101–2118 (NSEERGTQADWESPERRQ) show a composition bias toward basic and acidic residues. Residues 2129 to 2152 (TPNRQGTGSLSESSIPSVSDTSTP) are compositionally biased toward polar residues. Residues 2210–2225 (SSNSPHPQQSQHASPQ) are compositionally biased toward low complexity.

This sequence belongs to the calcium channel alpha-1 subunit (TC 1.A.1.11) family. CACNA1E subfamily. Interacts with EFHC1. Voltage-dependent calcium channels are multisubunit complexes, consisting of alpha-1, alpha-2, beta and delta subunits in a 1:1:1:1 ratio. The channel activity is directed by the pore-forming and voltage-sensitive alpha-1 subunit. In many cases, this subunit is sufficient to generate voltage-sensitive calcium channel activity. The auxiliary subunits beta and alpha-2/delta linked by a disulfide bridge regulate the channel activity. Expressed in neuronal tissues and in kidney.

It is found in the membrane. The enzyme catalyses Ca(2+)(in) = Ca(2+)(out). Its function is as follows. Voltage-sensitive calcium channels (VSCC) mediate the entry of calcium ions into excitable cells. They are also involved in a variety of calcium-dependent processes, including muscle contraction, hormone or neurotransmitter release, gene expression, cell motility, cell division and cell death. The isoform alpha-1E gives rise to R-type calcium currents. R-type calcium channels belong to the 'high-voltage activated' (HVA) group and are blocked by nickel. They are however insensitive to dihydropyridines (DHP). Calcium channels containing alpha-1E subunit could be involved in the modulation of firing patterns of neurons which is important for information processing. Functionally, voltage-sensitive calcium channels (VSCC) mediate the entry of calcium ions into excitable cells. They are also involved in a variety of calcium-dependent processes, including muscle contraction, hormone or neurotransmitter release, gene expression, cell motility, cell division and cell death. The isoform alpha-1E gives rise to R-type calcium currents. This is Voltage-dependent R-type calcium channel subunit alpha-1E (CACNA1E) from Homo sapiens (Human).